Consider the following 284-residue polypeptide: Bifunctional protein FolD (284 aa).

NADP(+)-binding positions include 166 to 168 (GAS) and Ile-232.

Belongs to the tetrahydrofolate dehydrogenase/cyclohydrolase family. As to quaternary structure, homodimer.

The enzyme catalyses (6R)-5,10-methylene-5,6,7,8-tetrahydrofolate + NADP(+) = (6R)-5,10-methenyltetrahydrofolate + NADPH. It carries out the reaction (6R)-5,10-methenyltetrahydrofolate + H2O = (6R)-10-formyltetrahydrofolate + H(+). It functions in the pathway one-carbon metabolism; tetrahydrofolate interconversion. In terms of biological role, catalyzes the oxidation of 5,10-methylenetetrahydrofolate to 5,10-methenyltetrahydrofolate and then the hydrolysis of 5,10-methenyltetrahydrofolate to 10-formyltetrahydrofolate. This chain is Bifunctional protein FolD, found in Shewanella sp. (strain ANA-3).